Here is an 897-residue protein sequence, read N- to C-terminus: MEQSEDTIQHERKNTFLSRVFGVHSSEVGDSIETAELSQYPIQIARSGSNAIDESRVIESDQASSSEEEDTDGHDLSVAENMTSYNGAQGSGSEDSDVPFSDQELETIETYTIAKVGQGSSSEDDRLQADSAEEEDALLFQHRLQDGSKGRNKVSSQPLGLKRILGSKGKSILGKEPASQEDSFIFRKGPTWDEENQLRPESKRPGLLSGKSNARLSSPSRPSPLSARERALWKWANVENLDGFLQDVYSYYLGNGFYCIMIEKILNLLTLLFIVFISTYMSHCIDYSKLPNGHKFSDVRVDQCYETQITGTTKLLFWIFGVFVVLKVVQMYFDFRRIHEIHNFYTYLLNISDKELQTIPWQSVIHQIMRLKDQNAVTANVVEVKAKNHIDAHDVANRIMRKENYLIALYNKDILHLSLPIPLYRTSTLTKTLEWNIHLCIIGFAFNEAGFLKQSFLNPAQREFLSEELKKRFILAGFLNIILAPFLVVYFVLLYFFRYFNEYKTSPGSLSTRQYTPIAEWKFREYNELYHLFKKRMGLSYEVANTYINQFPNALGDYFFKFVKFISGSFVAILALMTVLDPENFLNFELTADRTVLFYMTVLGTIWAVCHSAVNDNCSVFDPEDSLKELITYIHYAPKEWDGRYHTDEVKQEFCKLYNLRVILLLRELASLIMTPFILWFSLPNSAESIVDFFREVTVYGDGLGYVCKYAMFDENCKKGLRTNKHLQGTQTKYGHSLGDDHDSSDEETDKGMNKMIQSYMYFVDDYQNSVNAVGKYQIPKTQNLSHESKYNMKSHQHYSWKKQFKLGSKPEDFKIGSVTPRALSSSILANKPKSNLRARLDPEISHSNVQFDDLGESFINSIPVADYDPIERSDAMGGNGVLGLLNQYYRKSDVGR.

Over 1–256 (MEQSEDTIQH…DVYSYYLGNG (256 aa)) the chain is Cytoplasmic. 3 disordered regions span residues 46–106 (RSGS…QELE), 112–131 (TIAK…QADS), and 195–224 (ENQL…RPSP). Polar residues predominate over residues 80–93 (ENMTSYNGAQGSGS). The span at 214–224 (ARLSSPSRPSP) shows a compositional bias: low complexity. A helical transmembrane segment spans residues 257 to 277 (FYCIMIEKILNLLTLLFIVFI). Residues 278–314 (STYMSHCIDYSKLPNGHKFSDVRVDQCYETQITGTTK) lie on the Lumenal side of the membrane. The chain crosses the membrane as a helical span at residues 315–335 (LLFWIFGVFVVLKVVQMYFDF). The Cytoplasmic portion of the chain corresponds to 336 to 431 (RRIHEIHNFY…PLYRTSTLTK (96 aa)). An intramembrane segment occupies 432–452 (TLEWNIHLCIIGFAFNEAGFL). At 453 to 472 (KQSFLNPAQREFLSEELKKR) the chain is on the cytoplasmic side. Residues 473 to 493 (FILAGFLNIILAPFLVVYFVL) traverse the membrane as a helical segment. Topologically, residues 494–558 (LYFFRYFNEY…NQFPNALGDY (65 aa)) are lumenal. The helical transmembrane segment at 559–579 (FFKFVKFISGSFVAILALMTV) threads the bilayer. Topologically, residues 580-661 (LDPENFLNFE…QEFCKLYNLR (82 aa)) are cytoplasmic. The stretch at 662–682 (VILLLRELASLIMTPFILWFS) is an intramembrane region. At 683 to 897 (LPNSAESIVD…QYYRKSDVGR (215 aa)) the chain is on the cytoplasmic side.

Belongs to the ATG9 family. Homotrimer; forms a homotrimer with a central pore that forms a path between the two membrane leaflets. In terms of processing, phosphorylated by ATG1. ATG1 phosphorylation is required for preautophagosome elongation.

The protein resides in the preautophagosomal structure membrane. The protein localises to the cytoplasmic vesicle membrane. It is found in the golgi apparatus membrane. It localises to the endoplasmic reticulum membrane. The enzyme catalyses a 1,2-diacyl-sn-glycero-3-phosphocholine(in) = a 1,2-diacyl-sn-glycero-3-phosphocholine(out). The catalysed reaction is a 1,2-diacyl-sn-glycero-3-phospho-L-serine(in) = a 1,2-diacyl-sn-glycero-3-phospho-L-serine(out). It catalyses the reaction a 1,2-diacyl-sn-glycero-3-phosphoethanolamine(in) = a 1,2-diacyl-sn-glycero-3-phosphoethanolamine(out). It carries out the reaction a 1,2-diacyl-sn-glycero-3-phospho-(1D-myo-inositol-3-phosphate)(in) = a 1,2-diacyl-sn-glycero-3-phospho-(1D-myo-inositol-3-phosphate)(out). In terms of biological role, phospholipid scramblase involved in autophagy and cytoplasm to vacuole transport (Cvt) vesicle formation. Cycles between the preautophagosomal structure/phagophore assembly site (PAS) and the cytoplasmic vesicle pool and supplies membrane for the growing autophagosome. Lipid scramblase activity plays a key role in preautophagosomal structure/phagophore assembly by distributing the phospholipids that arrive through ATG2 from the cytoplasmic to the luminal leaflet of the bilayer, thereby driving autophagosomal membrane expansion. Required for mitophagy. Also involved in endoplasmic reticulum-specific autophagic process and is essential for the survival of cells subjected to severe ER stress. Different machineries are required for anterograde trafficking to the PAS during either the Cvt pathway or bulk autophagy and for retrograde trafficking. In Eremothecium gossypii (strain ATCC 10895 / CBS 109.51 / FGSC 9923 / NRRL Y-1056) (Yeast), this protein is Autophagy-related protein 9 (ATG9).